The following is a 182-amino-acid chain: ATP synthase subunit delta (182 aa).

The protein belongs to the ATPase delta chain family. As to quaternary structure, F-type ATPases have 2 components, F(1) - the catalytic core - and F(0) - the membrane proton channel. F(1) has five subunits: alpha(3), beta(3), gamma(1), delta(1), epsilon(1). F(0) has three main subunits: a(1), b(2) and c(10-14). The alpha and beta chains form an alternating ring which encloses part of the gamma chain. F(1) is attached to F(0) by a central stalk formed by the gamma and epsilon chains, while a peripheral stalk is formed by the delta and b chains.

The protein resides in the cell membrane. F(1)F(0) ATP synthase produces ATP from ADP in the presence of a proton or sodium gradient. F-type ATPases consist of two structural domains, F(1) containing the extramembraneous catalytic core and F(0) containing the membrane proton channel, linked together by a central stalk and a peripheral stalk. During catalysis, ATP synthesis in the catalytic domain of F(1) is coupled via a rotary mechanism of the central stalk subunits to proton translocation. Functionally, this protein is part of the stalk that links CF(0) to CF(1). It either transmits conformational changes from CF(0) to CF(1) or is implicated in proton conduction. This is ATP synthase subunit delta from Lactobacillus gasseri (strain ATCC 33323 / DSM 20243 / BCRC 14619 / CIP 102991 / JCM 1131 / KCTC 3163 / NCIMB 11718 / NCTC 13722 / AM63).